The following is a 175-amino-acid chain: Gamma-crystallin B (175 aa).

Beta/gamma crystallin 'Greek key' domains follow at residues Gly2–Ser40 and Gly41–Pro83. Residues Pro84–Ala88 form a connecting peptide region. Beta/gamma crystallin 'Greek key' domains are found at residues Tyr89–Glu129 and Gly130–Met172.

The protein belongs to the beta/gamma-crystallin family. Monomer.

Crystallins are the dominant structural components of the vertebrate eye lens. This chain is Gamma-crystallin B (CRYGB), found in Homo sapiens (Human).